Reading from the N-terminus, the 122-residue chain is Probable non-specific lipid-transfer protein 3 (122 aa).

The N-terminal stretch at 1–29 (MARLNSKAVAAAVVLAAVVLMMAGREASA) is a signal peptide. Disulfide bonds link Cys33/Cys81, Cys43/Cys58, Cys59/Cys104, and Cys79/Cys118.

Belongs to the plant LTP family. In terms of tissue distribution, expressed in phloem. Also detected in the epidermis near the vascular tissues in resistant plants infected by Hessian fly larvae.

Functionally, plant non-specific lipid-transfer proteins transfer phospholipids as well as galactolipids across membranes. May play a role in wax or cutin deposition in the cell walls of expanding epidermal cells and certain secretory tissues. This Triticum aestivum (Wheat) protein is Probable non-specific lipid-transfer protein 3 (LTP3).